A 151-amino-acid polypeptide reads, in one-letter code: Ribosome maturation factor RimP (151 aa).

The protein belongs to the RimP family.

It localises to the cytoplasm. Required for maturation of 30S ribosomal subunits. The sequence is that of Ribosome maturation factor RimP from Thermoanaerobacter sp. (strain X514).